The primary structure comprises 621 residues: TOX high mobility group box family member 4 (621 aa).

Disordered stretches follow at residues 153 to 227 (LGLS…QKPV) and 305 to 333 (LDPAPPSQTPSPPPMATVDPASPAPASIE). Thr-176 bears the Phosphothreonine mark. Phosphoserine is present on residues Ser-178, Ser-181, and Ser-182. Residues 183 to 193 (LHEDGVEDFRR) are compositionally biased toward basic and acidic residues. Residues 208–218 (KQKAPKKRKKK) are compositionally biased toward basic residues. Residues 213–218 (KKRKKK) carry the Nuclear localization signal motif. The HMG box DNA-binding region spans 223–291 (PQKPVSAYAL…EYLKALAAYK (69 aa)). A compositionally biased stretch (pro residues) spans 307–319 (PAPPSQTPSPPPM). Thr-313 carries the post-translational modification Phosphothreonine. At Ser-315 the chain carries Phosphoserine. Low complexity predominate over residues 320–333 (ATVDPASPAPASIE). Arg-481 is modified (asymmetric dimethylarginine). Positions 510 to 525 (PTVESSPERPMNNSPE) are enriched in polar residues. The interval 510 to 529 (PTVESSPERPMNNSPEAHTV) is disordered. 6 positions are modified to phosphoserine: Ser-533, Ser-550, Ser-552, Ser-560, Ser-562, and Ser-567.

In terms of assembly, component of the PNUTS-PP1 phosphatase complex, composed of PPP1R10/PNUTS, TOX4, WDR82 and PPP1CA or PPP1CB or PPP1CC. Interacts with PPP1R10/PNUTS. Interacts with FOXO1 and CREB1 (increased by cAMP); FOXO1 and CREB1 are required for full induction of TOX4-dependent activity and the interactions are inhibited by insulin. Expressed in liver (at protein level).

It is found in the nucleus. Its subcellular location is the chromosome. Its activity is regulated as follows. In liver, recruited to target gene promoters following treatment with dexamethasone and cAMP. Binding is decreased in presence of insulin. Functionally, transcription factor that modulates cell fate reprogramming from the somatic state to the pluripotent and neuronal fate. In liver, controls the expression of hormone-regulated gluconeogenic genes such as G6PC1 and PCK1. This regulation is independent of the insulin receptor activation. Also acts as a regulatory component of protein phosphatase 1 (PP1) complexes. Component of the PNUTS-PP1 protein phosphatase complex, a PP1 complex that regulates RNA polymerase II transcription pause-release. PNUTS-PP1 also plays a role in the control of chromatin structure and cell cycle progression during the transition from mitosis into interphase. This is TOX high mobility group box family member 4 from Homo sapiens (Human).